A 377-amino-acid chain; its full sequence is Succinyl-diaminopimelate desuccinylase (377 aa).

His68 contributes to the Zn(2+) binding site. The active site involves Asp70. Asp101 serves as a coordination point for Zn(2+). The active-site Proton acceptor is Glu135. The Zn(2+) site is built by Glu136, Glu164, and His350.

Belongs to the peptidase M20A family. DapE subfamily. In terms of assembly, homodimer. It depends on Zn(2+) as a cofactor. Co(2+) is required as a cofactor.

The enzyme catalyses N-succinyl-(2S,6S)-2,6-diaminopimelate + H2O = (2S,6S)-2,6-diaminopimelate + succinate. The protein operates within amino-acid biosynthesis; L-lysine biosynthesis via DAP pathway; LL-2,6-diaminopimelate from (S)-tetrahydrodipicolinate (succinylase route): step 3/3. Functionally, catalyzes the hydrolysis of N-succinyl-L,L-diaminopimelic acid (SDAP), forming succinate and LL-2,6-diaminopimelate (DAP), an intermediate involved in the bacterial biosynthesis of lysine and meso-diaminopimelic acid, an essential component of bacterial cell walls. The protein is Succinyl-diaminopimelate desuccinylase of Acinetobacter baumannii (strain AB307-0294).